The sequence spans 169 residues: Spore protein SP21 (169 aa).

Disordered regions lie at residues 1-21 and 150-169; these read MADL…REWD and QPKR…HIKA. One can recognise a sHSP domain in the interval 47-159; it reads QGPPAFVPAF…QPKRIQVASS (113 aa).

This sequence belongs to the small heat shock protein (HSP20) family.

In terms of biological role, may stabilize cellular components during stress and spore formation. The protein is Spore protein SP21 (hspA) of Stigmatella aurantiaca (strain DW4/3-1).